A 739-amino-acid chain; its full sequence is uncharacterized protein (739 aa).

The next 8 helical transmembrane spans lie at 53–73 (LALG…ALTV), 90–110 (WHLF…AAIP), 114–134 (LMFI…GTFM), 178–198 (TYIL…QLGL), 421–441 (LIWI…VCIV), 457–477 (AFLR…LALM), 491–511 (GLAM…LPAV), and 532–552 (IVYF…SWMY).

This sequence belongs to the aromatic acid exporter ArAE (TC 2.A.85) family.

It localises to the cell membrane. This is an uncharacterized protein from Gluconobacter oxydans (strain 621H) (Gluconobacter suboxydans).